The chain runs to 187 residues: dCTP deaminase (187 aa).

DCTP-binding positions include 107 to 112 (KSTYAR), 131 to 133 (TLE), glutamine 152, tyrosine 166, lysine 175, and glutamine 176. Glutamate 133 acts as the Proton donor/acceptor in catalysis.

This sequence belongs to the dCTP deaminase family. In terms of assembly, homotrimer.

The catalysed reaction is dCTP + H2O + H(+) = dUTP + NH4(+). It functions in the pathway pyrimidine metabolism; dUMP biosynthesis; dUMP from dCTP (dUTP route): step 1/2. Functionally, catalyzes the deamination of dCTP to dUTP. This is dCTP deaminase from Ehrlichia canis (strain Jake).